We begin with the raw amino-acid sequence, 977 residues long: uncharacterized protein (977 aa).

Polar residues predominate over residues 1 to 24 (MMQQRSGSLSLLSNAVQAGQSSDP). A disordered region spans residues 1-65 (MMQQRSGSLS…HEKTKAGKDR (65 aa)). The zn(2)-C6 fungal-type DNA-binding region spans 72–99 (CQSCRKKKVKCSGERPSCDQCLKHNIPC). The tract at residues 176–195 (LSHPTIVPSSNSSSLLNSTN) is disordered. Low complexity predominate over residues 177 to 195 (SHPTIVPSSNSSSLLNSTN). S220 carries the post-translational modification Phosphoserine. Disordered stretches follow at residues 287-307 (TDSL…DSNR), 357-380 (NSAS…NNSL), and 751-774 (HTPI…ANGA). Over residues 364–379 (STSYTNNNDTTSDNNS) the composition is skewed to low complexity. The segment covering 751-770 (HTPINVTNGESQNNSNNDPS) has biased composition (polar residues).

It localises to the cytoplasm. The protein resides in the nucleus. This is an uncharacterized protein from Schizosaccharomyces pombe (strain 972 / ATCC 24843) (Fission yeast).